The following is a 502-amino-acid chain: ATP synthase subunit alpha (502 aa).

169 to 176 (GDRQTGKT) is a binding site for ATP.

Belongs to the ATPase alpha/beta chains family. In terms of assembly, F-type ATPases have 2 components, CF(1) - the catalytic core - and CF(0) - the membrane proton channel. CF(1) has five subunits: alpha(3), beta(3), gamma(1), delta(1), epsilon(1). CF(0) has three main subunits: a(1), b(2) and c(9-12). The alpha and beta chains form an alternating ring which encloses part of the gamma chain. CF(1) is attached to CF(0) by a central stalk formed by the gamma and epsilon chains, while a peripheral stalk is formed by the delta and b chains.

It is found in the cell inner membrane. The catalysed reaction is ATP + H2O + 4 H(+)(in) = ADP + phosphate + 5 H(+)(out). Its function is as follows. Produces ATP from ADP in the presence of a proton gradient across the membrane. The alpha chain is a regulatory subunit. The chain is ATP synthase subunit alpha from Nitratidesulfovibrio vulgaris (strain DSM 19637 / Miyazaki F) (Desulfovibrio vulgaris).